The chain runs to 120 residues: Cytochrome c oxidase subunit 5 (120 aa).

Position 2 is a blocked amino end (Ser) (S2). The Zn(2+) site is built by C76, H84, C99, and C102.

This sequence belongs to the cytochrome c oxidase subunit 5B family. Component of the cytochrome c oxidase (complex IV, CIV), a multisubunit enzyme composed of a catalytic core of 3 subunits and several supernumerary subunits. The complex exists as a monomer or a dimer and forms supercomplexes (SCs) in the inner mitochondrial membrane with ubiquinol-cytochrome c oxidoreductase (cytochrome b-c1 complex, complex III, CIII). Slime mold cytochrome c oxidase consists of at least seven different polypeptides species, subunits I, II, III, IV, V, VI, and VIIe/s in order of MW.

It localises to the mitochondrion inner membrane. It participates in energy metabolism; oxidative phosphorylation. Its function is as follows. Component of the cytochrome c oxidase, the last enzyme in the mitochondrial electron transport chain which drives oxidative phosphorylation. The respiratory chain contains 3 multisubunit complexes succinate dehydrogenase (complex II, CII), ubiquinol-cytochrome c oxidoreductase (cytochrome b-c1 complex, complex III, CIII) and cytochrome c oxidase (complex IV, CIV), that cooperate to transfer electrons derived from NADH and succinate to molecular oxygen, creating an electrochemical gradient over the inner membrane that drives transmembrane transport and the ATP synthase. Cytochrome c oxidase is the component of the respiratory chain that catalyzes the reduction of oxygen to water. Electrons originating from reduced cytochrome c in the intermembrane space (IMS) are transferred via the dinuclear copper A center (CU(A)) of subunit 2 and heme A of subunit 1 to the active site in subunit 1, a binuclear center (BNC) formed by heme A3 and copper B (CU(B)). The BNC reduces molecular oxygen to 2 water molecules using 4 electrons from cytochrome c in the IMS and 4 protons from the mitochondrial matrix. The sequence is that of Cytochrome c oxidase subunit 5 (cxeA) from Dictyostelium discoideum (Social amoeba).